Here is a 286-residue protein sequence, read N- to C-terminus: MIINHNMSAMYSNRVLGVTNLAQAKDMEKLSSGMKINRAGDDASGLAVSEKMRSQIRGLNQASRNAQNGISFIQVSEGYLQETTDIMHRIRELAVQSSNGIYSDEDRMQIQVEVSQLVAEVDRIASHAQFNGMNMLTGRFARATGENTVTGSMWLHIGANMDQRMQVFIGTMTAMAVGVREIGSEKVMSIAAPDDANRAIGTIDEGLKKINKQRADLGAYQNRLEMTVKGLDVAAENTQAAESTIRDTDMAKQMVDFTKNRILAQAGTAMLAQANVTTQNVLTLLQ.

The protein belongs to the bacterial flagellin family. In terms of assembly, the core of the flagellum consists of several antigenically related polypeptides. Glycosylated. Glycosylation is not essential for motility.

Its subcellular location is the periplasmic flagellum. It localises to the periplasm. In terms of biological role, component of the core of the flagella. In Treponema maltophilum, this protein is Flagellar filament 31.3 kDa core protein (flaB2).